The following is a 48-amino-acid chain: Sperm protamine R3 isoform 1 (48 aa).

Over residues 1 to 29 (ARRRHSMKKKRKSVRRRKTRKNQRKRKNS) the composition is skewed to basic residues. Residues 1–48 (ARRRHSMKKKRKSVRRRKTRKNQRKRKNSLGRSFKQHGFLKQPPRFRP) form a disordered region.

As to expression, testis.

It localises to the nucleus. The protein localises to the chromosome. Functionally, protamines substitute for histones in the chromatin of sperm during the haploid phase of spermatogenesis. They compact sperm DNA into a highly condensed, stable and inactive complex. The chain is Sperm protamine R3 isoform 1 from Hydrolagus colliei (Spotted ratfish).